A 483-amino-acid chain; its full sequence is Glucose-1-phosphate adenylyltransferase large subunit 3, chloroplastic/amyloplastic (483 aa).

It belongs to the bacterial/plant glucose-1-phosphate adenylyltransferase family. As to quaternary structure, heterotetramer. Tubers.

The protein resides in the plastid. It localises to the chloroplast. It is found in the amyloplast. The enzyme catalyses alpha-D-glucose 1-phosphate + ATP + H(+) = ADP-alpha-D-glucose + diphosphate. Its pathway is glycan biosynthesis; starch biosynthesis. Activated by 3'phosphoglycerate, inhibited by orthophosphate. Allosteric regulation. In terms of biological role, this protein plays a role in synthesis of starch. It catalyzes the synthesis of the activated glycosyl donor, ADP-glucose from Glc-1-P and ATP. This is Glucose-1-phosphate adenylyltransferase large subunit 3, chloroplastic/amyloplastic (AGPS3) from Solanum tuberosum (Potato).